Reading from the N-terminus, the 870-residue chain is Serine protease DegP homolog (870 aa).

The N-terminal stretch at 1 to 29 is a signal peptide; that stretch reads MDIIFCTPTYCKIMLMIIMLISLRTRCDT. Positions 128-151 are disordered; it reads KNPLNDNFKNPKLRKHSPNNKKNK. Positions 138-151 are enriched in basic residues; the sequence is PKLRKHSPNNKKNK. Active-site charge relay system residues include histidine 328, aspartate 359, and serine 437.

The protein belongs to the peptidase S1C family. As to quaternary structure, oligomer; may form trimers or hexamers. Forms a complex at least composed of DegP, ENO and HSP70.

Its subcellular location is the cytoplasm. The protein localises to the parasitophorous vacuole. It is found in the host cell membrane. It localises to the host cytoplasm. Its function is as follows. Serine protease which also acts as a protein chaperone. Plays a role in the parasite development in host erythrocytes possibly by protecting it against thermal and oxidative stresses. The protein is Serine protease DegP homolog of Plasmodium falciparum (isolate 3D7).